A 1020-amino-acid polypeptide reads, in one-letter code: Mediator of RNA polymerase II transcription subunit 16 (1020 aa).

This sequence belongs to the Mediator complex subunit 16 family. As to quaternary structure, component of the Mediator complex.

It is found in the nucleus. Its function is as follows. Component of the Mediator complex, a coactivator involved in the regulated transcription of nearly all RNA polymerase II-dependent genes. Mediator functions as a bridge to convey information from gene-specific regulatory proteins to the basal RNA polymerase II transcription machinery. Mediator is recruited to promoters by direct interactions with regulatory proteins and serves as a scaffold for the assembly of a functional preinitiation complex with RNA polymerase II and the general transcription factors. In Scheffersomyces stipitis (strain ATCC 58785 / CBS 6054 / NBRC 10063 / NRRL Y-11545) (Yeast), this protein is Mediator of RNA polymerase II transcription subunit 16 (SIN4).